Consider the following 284-residue polypeptide: Tropomyosin (284 aa).

The tract at residues 1-47 (MDAIKKKMQAMKIEKDNAMDRADAAEEKARQQQERVEKLEEELRDTQ) is disordered. Residues 1 to 284 (MDAIKKKMQA…DQTFQELSGY (284 aa)) adopt a coiled-coil conformation. The span at 12 to 38 (KIEKDNAMDRADAAEEKARQQQERVEK) shows a compositional bias: basic and acidic residues.

Belongs to the tropomyosin family.

Functionally, tropomyosin, in association with the troponin complex, plays a central role in the calcium dependent regulation of muscle contraction. This chain is Tropomyosin, found in Trichinella spiralis (Trichina worm).